The primary structure comprises 211 residues: Protein-L-isoaspartate O-methyltransferase (211 aa).

Serine 62 is an active-site residue.

It belongs to the methyltransferase superfamily. L-isoaspartyl/D-aspartyl protein methyltransferase family.

The protein resides in the cytoplasm. It carries out the reaction [protein]-L-isoaspartate + S-adenosyl-L-methionine = [protein]-L-isoaspartate alpha-methyl ester + S-adenosyl-L-homocysteine. Catalyzes the methyl esterification of L-isoaspartyl residues in peptides and proteins that result from spontaneous decomposition of normal L-aspartyl and L-asparaginyl residues. It plays a role in the repair and/or degradation of damaged proteins. This is Protein-L-isoaspartate O-methyltransferase from Shewanella halifaxensis (strain HAW-EB4).